A 555-amino-acid chain; its full sequence is Methionine--tRNA ligase (555 aa).

The 'HIGH' region signature appears at 13 to 23 (PYANGSLHIGH). Residues Cys144, Cys147, Cys157, and Cys160 each coordinate Zn(2+). Residues 330–334 (KISKS) carry the 'KMSKS' region motif. Lys333 is an ATP binding site.

This sequence belongs to the class-I aminoacyl-tRNA synthetase family. MetG type 1 subfamily. In terms of assembly, monomer. Zn(2+) is required as a cofactor.

The protein localises to the cytoplasm. The enzyme catalyses tRNA(Met) + L-methionine + ATP = L-methionyl-tRNA(Met) + AMP + diphosphate. In terms of biological role, is required not only for elongation of protein synthesis but also for the initiation of all mRNA translation through initiator tRNA(fMet) aminoacylation. The chain is Methionine--tRNA ligase from Blochmanniella pennsylvanica (strain BPEN).